Reading from the N-terminus, the 302-residue chain is Oxygen-dependent coproporphyrinogen-III oxidase (302 aa).

Ser94 contacts substrate. A divalent metal cation contacts are provided by His98 and His108. His108 serves as the catalytic Proton donor. 110–112 (NVR) provides a ligand contact to substrate. Residues His147 and His177 each coordinate a divalent metal cation. The interval 242-277 (YVEFNLVYDRGTLFGLQTGGRTESILMSMPPLVRWQ) is important for dimerization. Substrate is bound at residue 260–262 (GGR).

It belongs to the aerobic coproporphyrinogen-III oxidase family. As to quaternary structure, homodimer. Requires a divalent metal cation as cofactor.

The protein localises to the cytoplasm. It carries out the reaction coproporphyrinogen III + O2 + 2 H(+) = protoporphyrinogen IX + 2 CO2 + 2 H2O. It participates in porphyrin-containing compound metabolism; protoporphyrin-IX biosynthesis; protoporphyrinogen-IX from coproporphyrinogen-III (O2 route): step 1/1. In terms of biological role, involved in the heme biosynthesis. Catalyzes the aerobic oxidative decarboxylation of propionate groups of rings A and B of coproporphyrinogen-III to yield the vinyl groups in protoporphyrinogen-IX. This Shewanella sp. (strain MR-4) protein is Oxygen-dependent coproporphyrinogen-III oxidase.